Here is a 990-residue protein sequence, read N- to C-terminus: Putative ariadne-like RING finger protein R811 (990 aa).

A VWFA domain is found at 8–201 (DLAIVVDATG…IITQTTIKLL (194 aa)). The interval 797 to 990 (EKGLCMICFN…GGAFEYDQDD (194 aa)) is TRIAD supradomain. Zn(2+) is bound by residues cysteine 801, cysteine 804, cysteine 827, and cysteine 830. Residues 801–854 (CMICFNEFSKSNLRQICGRKVCQSVACYDCMKSWYGENKVGDLIHVNALTCPFC) form an RING-type 1 zinc finger. The IBR-type zinc finger occupies 855 to 903 (KQCPMFNILAAFNRQVCAMVRTNNSFDIDWWYGWCLKCFQPKKVVEKEC). Positions 930 and 935 each coordinate Zn(2+). The RING-type 2; atypical zinc-finger motif lies at 930–961 (CPNSLCKIPIIKDGGCNHMECTACKKHFCWLC). Cysteine 945 is a catalytic residue. Residues cysteine 950 and cysteine 953 each coordinate Zn(2+).

The sequence is that of Putative ariadne-like RING finger protein R811 from Acanthamoeba polyphaga (Amoeba).